We begin with the raw amino-acid sequence, 465 residues long: Gamma-aminobutyric acid receptor subunit alpha-6 (465 aa).

The N-terminal stretch at 1 to 19 is a signal peptide; that stretch reads MALLIAWVCVAVSIEKALG. Residues 20–243 lie on the Extracellular side of the membrane; that stretch reads GQGDGGDLYS…FHLQRKMGYF (224 aa). An N-linked (GlcNAc...) asparagine glycan is attached at N31. R84 lines the 4-aminobutanoate pocket. N-linked (GlcNAc...) asparagine glycans are attached at residues N128 and N141. Residue T147 participates in 4-aminobutanoate binding. C156 and C170 are joined by a disulfide. The helical transmembrane segment at 244–264 threads the bilayer; the sequence is MIQIYTPCIMTVILSQVSFWI. Over 265-270 the chain is Cytoplasmic; sequence NKESVP. A helical transmembrane segment spans residues 271–290; the sequence is ARTVFGITTVLTMTTLSISA. The Extracellular portion of the chain corresponds to 291–304; sequence RHSLPKVSYATAMD. The chain crosses the membrane as a helical span at residues 305–325; it reads WFIAVCFAFVFSALIEFAAVN. At 326-424 the chain is on the cytoplasmic side; the sequence is YFTNLQTQRA…GTSKIDQYSR (99 aa). Residues 392–415 are disordered; that stretch reads NSASQCQPVSAPPPAPPAPPPVGG. The span at 401–413 shows a compositional bias: pro residues; sequence SAPPPAPPAPPPV. Residues 425–445 form a helical membrane-spanning segment; sequence ILFPVAFAGFNLVYWVVYLSK. The Extracellular portion of the chain corresponds to 446 to 465; the sequence is DTMEFFEPTAMHLRNDHQSN.

This sequence belongs to the ligand-gated ion channel (TC 1.A.9) family. Gamma-aminobutyric acid receptor (TC 1.A.9.5) subfamily. GABRA6 sub-subfamily. As to quaternary structure, heteropentamer, formed by a combination of alpha (GABRA1-6), beta (GABRB1-3), gamma (GABRG1-3), delta (GABRD), epsilon (GABRE), rho (GABRR1-3), pi (GABRP) and theta (GABRQ) chains, each subunit exhibiting distinct physiological and pharmacological properties. Expressed in brain, in cerebellar granule cells.

It is found in the postsynaptic cell membrane. The protein localises to the cell membrane. It carries out the reaction chloride(in) = chloride(out). Functionally, alpha subunit of the heteropentameric ligand-gated chloride channel gated by gamma-aminobutyric acid (GABA), a major inhibitory neurotransmitter in the brain. GABA-gated chloride channels, also named GABA(A) receptors (GABAAR), consist of five subunits arranged around a central pore and contain GABA active binding site(s) located at the alpha and beta subunit interface(s). When activated by GABA, GABAARs selectively allow the flow of chloride anions across the cell membrane down their electrochemical gradient. This is Gamma-aminobutyric acid receptor subunit alpha-6 (GABRA6) from Gallus gallus (Chicken).